A 959-amino-acid polypeptide reads, in one-letter code: MSPVATTTSVTPDVISSLKTSFSAGQTSYIPSTLFDVLSYAAERYPSHELGFITSSAHDSSIQTKTFSLFNAQVRNLGRALLDLNKPAGSIIVVYLTEHEDNMAAVWACLLAGYVPCLQPALSAQQAHKEGHVAHIKNLFGSATWLTNEAGAEQVSSIAGLEIHLLSELKIAAEGYSVSADWTARTVQPDDEAILFLTSGSTGFSKAVVHTHRTILAACYAKGEAYGLTSESNILNWVGFDHVAGSLEMHIAPLLYGASQLHVHASAILSDPLRFLQLIDEKSINVAFAPNFLLAKLTRDLEKKTELFGSFDLSSVTRINSGGEAVVSKTAKAFVATLKNLSRDPSKVSFVISPGFGMTETCAGCIYNPADVSTSEPNYEFLELGTPITGCEMRIVNPEDGVTPRVDGESGELQVRGPMVFSRYYNNAEATASSFVEGGWYRTGDVGIVENGVMRLSGRIKETVIVHGVSYGIPELETYLQTVEGVTHSFLAAAPYRAPGQETEGFIIFYAPTFDLYGEDASSKLFATHRALRDISVKMITLPPQHIVPIPVNQMEKTTLGKLSRARLTGLFKQGELAKHIARAEELLSEARGASFVTPQTETEQTLAAIYAGIFNLEVADVSATDNFFELGGTSIDVIRLKREGEAAFDLPEIPTIQILKHPVVSSLANYIVALKTKGVNAEEYDPIVPLQLTGKKTPIFMVHPGVGEVLIFVNLAKYFQNERPFYALRARGFEPGQPFFTSMDEMVSCYAAAVKRTQAHGPYAIAGYSYGGVVAFEVAKRLEAMGEEVKFTGLINIPPHIADRMHEIDWTGGMLNLSYFLGLVSKQDANDLAPSMRPLTRKEQLEIVWKLSPPERLVELQLTPEKLDHWVDIAGSLIECGKEYNPGGSVSALDVFYAIPLRGSKEDWLNKQLKPWEEFSRGATSYTDVPGQHYTLMDFDHVPGFQKIFRSRLEARGL.

The segment at 59-466 is adenylation (A) domain; the sequence is DSSIQTKTFS…SGRIKETVIV (408 aa). The region spanning 598 to 676 is the Carrier domain; that stretch reads TPQTETEQTL…SLANYIVALK (79 aa). The tract at residues 603-673 is thiolation and peptide carrier (T) domain; it reads TEQTLAAIYA…VVSSLANYIV (71 aa). Serine 635 is subject to O-(pantetheine 4'-phosphoryl)serine. The tract at residues 699–946 is thioesterase (TE) domain; the sequence is PIFMVHPGVG…LMDFDHVPGF (248 aa).

Belongs to the ATP-dependent AMP-binding enzyme family.

It participates in secondary metabolite biosynthesis. An L-tyrosine:2-oxoglutarate aminotransferase (probably invD) and atromentin synthetase invA1 catalyze consecutive steps to turn over L-tyrosine into atromentin, which represents the generic precursor molecule for the entire terphenylquinone and pulvinic acid family of pigments, which are widely distributed secondary metabolites in homobasidiomycetes. The first step catalyzed by the aminotransferase converts L-tyrosine in to 4-hydroxyphenylpyruvate (4-HPP). Adenylation of two 4-HPP monomers by the invA1 adenylation (A) domain, covalent tethering of the monomers as a thioester and oxoester onto the invA1 thiolation (T) and thioesterase (TE) domains, respectively, and symmetric C-C-bond formation between two monomers catalyzed by the invA1 TE domain leads to atromentin. The chain is Atromentin synthetase invA1 (invA1) from Paxillus involutus (Naked brimcap).